A 370-amino-acid chain; its full sequence is Small ribosomal subunit biogenesis GTPase RsgA 1 (370 aa).

One can recognise a CP-type G domain in the interval 97–255 (QTQLDRPPIA…LADTPGFNQP (159 aa)). Residues 146-149 (NKSD) and 197-205 (GPSGVGKSS) each bind GTP. 4 residues coordinate Zn(2+): cysteine 280, cysteine 285, histidine 287, and cysteine 293. The segment at 325-370 (PESTLKLKTKGKGQSQYEPKLESKKYRRTSRRTQVQGLQDLYQEEE) is disordered.

Belongs to the TRAFAC class YlqF/YawG GTPase family. RsgA subfamily. Monomer. Associates with 30S ribosomal subunit, binds 16S rRNA. Zn(2+) serves as cofactor.

It localises to the cytoplasm. Functionally, one of several proteins that assist in the late maturation steps of the functional core of the 30S ribosomal subunit. Helps release RbfA from mature subunits. May play a role in the assembly of ribosomal proteins into the subunit. Circularly permuted GTPase that catalyzes slow GTP hydrolysis, GTPase activity is stimulated by the 30S ribosomal subunit. This chain is Small ribosomal subunit biogenesis GTPase RsgA 1, found in Nostoc sp. (strain PCC 7120 / SAG 25.82 / UTEX 2576).